Reading from the N-terminus, the 255-residue chain is Indole-3-glycerol phosphate synthase (255 aa).

Belongs to the TrpC family.

The enzyme catalyses 1-(2-carboxyphenylamino)-1-deoxy-D-ribulose 5-phosphate + H(+) = (1S,2R)-1-C-(indol-3-yl)glycerol 3-phosphate + CO2 + H2O. Its pathway is amino-acid biosynthesis; L-tryptophan biosynthesis; L-tryptophan from chorismate: step 4/5. In Streptococcus pneumoniae (strain 70585), this protein is Indole-3-glycerol phosphate synthase.